The sequence spans 161 residues: NADH-quinone oxidoreductase subunit I (161 aa).

4Fe-4S ferredoxin-type domains are found at residues 52–82 and 92–121; these read LRRYPNGEERCIACKLCEAVCPAQAITIESS and TRYDIDMMKCIYCGLCEESCPVDAIVQGPN. Residues cysteine 62, cysteine 65, cysteine 68, cysteine 72, cysteine 101, cysteine 104, cysteine 107, and cysteine 111 each contribute to the [4Fe-4S] cluster site.

This sequence belongs to the complex I 23 kDa subunit family. As to quaternary structure, NDH-1 is composed of 14 different subunits. Subunits NuoA, H, J, K, L, M, N constitute the membrane sector of the complex. [4Fe-4S] cluster serves as cofactor.

The protein resides in the cell inner membrane. The catalysed reaction is a quinone + NADH + 5 H(+)(in) = a quinol + NAD(+) + 4 H(+)(out). Its function is as follows. NDH-1 shuttles electrons from NADH, via FMN and iron-sulfur (Fe-S) centers, to quinones in the respiratory chain. The immediate electron acceptor for the enzyme in this species is believed to be ubiquinone. Couples the redox reaction to proton translocation (for every two electrons transferred, four hydrogen ions are translocated across the cytoplasmic membrane), and thus conserves the redox energy in a proton gradient. The chain is NADH-quinone oxidoreductase subunit I from Pelagibacter ubique (strain HTCC1062).